A 269-amino-acid chain; its full sequence is Small ribosomal subunit protein uS2 (269 aa).

Residues 235–269 (FDAKNPLKPQNYNTLNKRPYQDSPRKPSYQNQNQR) are disordered.

The protein belongs to the universal ribosomal protein uS2 family.

This is Small ribosomal subunit protein uS2 from Aster yellows witches'-broom phytoplasma (strain AYWB).